Here is a 489-residue protein sequence, read N- to C-terminus: UDP-N-acetylmuramoylalanine--D-glutamate ligase (489 aa).

An ATP-binding site is contributed by 126 to 132 (GTNGKTT).

The protein belongs to the MurCDEF family.

The protein localises to the cytoplasm. The catalysed reaction is UDP-N-acetyl-alpha-D-muramoyl-L-alanine + D-glutamate + ATP = UDP-N-acetyl-alpha-D-muramoyl-L-alanyl-D-glutamate + ADP + phosphate + H(+). It participates in cell wall biogenesis; peptidoglycan biosynthesis. Its function is as follows. Cell wall formation. Catalyzes the addition of glutamate to the nucleotide precursor UDP-N-acetylmuramoyl-L-alanine (UMA). In Mycobacterium avium (strain 104), this protein is UDP-N-acetylmuramoylalanine--D-glutamate ligase.